Here is a 694-residue protein sequence, read N- to C-terminus: Glycine--tRNA ligase beta subunit (694 aa).

The protein belongs to the class-II aminoacyl-tRNA synthetase family. Tetramer of two alpha and two beta subunits.

The protein resides in the cytoplasm. It catalyses the reaction tRNA(Gly) + glycine + ATP = glycyl-tRNA(Gly) + AMP + diphosphate. The polypeptide is Glycine--tRNA ligase beta subunit (Moorella thermoacetica (strain ATCC 39073 / JCM 9320)).